The following is a 207-amino-acid chain: HTH-type transcriptional regulator BetI 2 (207 aa).

An HTH tetR-type domain is found at 8–68; sequence PIRRQQLIKA…ATMRQILTDL (61 aa). Residues 31–50 constitute a DNA-binding region (H-T-H motif); the sequence is TVMRIARHAGVSAGIISHYF.

It participates in amine and polyamine biosynthesis; betaine biosynthesis via choline pathway [regulation]. Repressor involved in the biosynthesis of the osmoprotectant glycine betaine. It represses transcription of the choline transporter BetT and the genes of BetAB involved in the synthesis of glycine betaine. This is HTH-type transcriptional regulator BetI 2 from Chromohalobacter salexigens (strain ATCC BAA-138 / DSM 3043 / CIP 106854 / NCIMB 13768 / 1H11).